The chain runs to 144 residues: L-fucose mutarotase (144 aa).

Residue His-22 is the Proton donor of the active site. Residues Asp-30, Arg-109, and 131-133 each bind substrate; that span reads YGN.

Belongs to the RbsD / FucU family. FucU mutarotase subfamily. In terms of assembly, homodecamer.

Its subcellular location is the cytoplasm. It carries out the reaction alpha-L-fucose = beta-L-fucose. It functions in the pathway carbohydrate metabolism; L-fucose metabolism. Its function is as follows. Involved in the anomeric conversion of L-fucose. The protein is L-fucose mutarotase of Actinobacillus pleuropneumoniae serotype 5b (strain L20).